We begin with the raw amino-acid sequence, 815 residues long: Bifunctional purine biosynthetic protein purD (815 aa).

Residues 6–452 (NILVIGSGSR…YRKDIGQKAL (447 aa)) are GARS. In terms of domain architecture, ATP-grasp spans 113–343 (KDFMARNNIP…LFEIVLACIE (231 aa)). 139–200 (IESLNYKIVL…EEFLDGEECS (62 aa)) serves as a coordination point for ATP. The Mg(2+) site is built by E313 and N315. An AIRS region spans residues 469–801 (VSYSESGVDI…KVYKIGKIIN (333 aa)).

It in the N-terminal section; belongs to the GARS family. In the C-terminal section; belongs to the AIR synthase family. Mg(2+) is required as a cofactor. It depends on Mn(2+) as a cofactor.

It is found in the cytoplasm. It localises to the cytosol. The enzyme catalyses 5-phospho-beta-D-ribosylamine + glycine + ATP = N(1)-(5-phospho-beta-D-ribosyl)glycinamide + ADP + phosphate + H(+). It catalyses the reaction 2-formamido-N(1)-(5-O-phospho-beta-D-ribosyl)acetamidine + ATP = 5-amino-1-(5-phospho-beta-D-ribosyl)imidazole + ADP + phosphate + H(+). It functions in the pathway purine metabolism; IMP biosynthesis via de novo pathway; 5-amino-1-(5-phospho-D-ribosyl)imidazole from N(2)-formyl-N(1)-(5-phospho-D-ribosyl)glycinamide: step 2/2. The protein operates within purine metabolism; IMP biosynthesis via de novo pathway; N(1)-(5-phospho-D-ribosyl)glycinamide from 5-phospho-alpha-D-ribose 1-diphosphate: step 2/2. Functionally, catalyzes the second and fifth step in the 'de novo' purine biosynthesis pathway; contains phosphoribosylamine--glycine ligase (GARS) and phosphoribosylformylglycinamidine cyclo-ligase (AIRS) activities. In Dictyostelium discoideum (Social amoeba), this protein is Bifunctional purine biosynthetic protein purD (purD).